A 140-amino-acid polypeptide reads, in one-letter code: Oocyte zinc finger protein XlCOF15 (140 aa).

5 C2H2-type zinc fingers span residues 6-28 (FTCK…QKIH), 34-56 (FTCT…QKVH), 62-84 (FICT…HVIH), 90-112 (FTCA…RAAH), and 118-140 (FICT…LKSH).

Belongs to the krueppel C2H2-type zinc-finger protein family.

The protein localises to the nucleus. Functionally, may be involved in transcriptional regulation. This chain is Oocyte zinc finger protein XlCOF15, found in Xenopus laevis (African clawed frog).